Consider the following 255-residue polypeptide: High-affinity branched-chain amino acid transport ATP-binding protein LivG (255 aa).

In terms of domain architecture, ABC transporter spans 6–254; that stretch reads LSVNGLMMRF…PDVIRAYLGE (249 aa). 38-45 is a binding site for ATP; it reads GPNGAGKT.

The protein belongs to the ABC transporter superfamily.

Functionally, component of the leucine-specific transport system. The protein is High-affinity branched-chain amino acid transport ATP-binding protein LivG (livG) of Escherichia coli O157:H7.